The primary structure comprises 276 residues: MDSQMLVALGLSLVGGLSTSLGALFVVLSETPNMKMLGLLQGFASGLMLSISFLDLAHNAINSIGFFKANLWFFGGVIFFACITKFIPEPTLGPSTDGKRRKKNGDEGGKDMMKKHRKQVLYSGLITAIGISLHNFPEGMAVFLGSIKGMRVGVNLALAIALHNIPEGVAVALPIYFATESKWQAFKLATLSGLAEPLGVIIVAYLFPRSLSPEILEGLLGAVGGIMAFLTLHEMLPLAFDYAGQKQAVKAVFFGMACMSASLYFLELSLPETMSL.

Over 1-6 (MDSQML) the chain is Cytoplasmic. A helical transmembrane segment spans residues 7 to 27 (VALGLSLVGGLSTSLGALFVV). Over 28-35 (LSETPNMK) the chain is Lumenal. The chain crosses the membrane as a helical span at residues 36 to 56 (MLGLLQGFASGLMLSISFLDL). Residues 57–63 (AHNAINS) lie on the Cytoplasmic side of the membrane. A helical transmembrane segment spans residues 64–84 (IGFFKANLWFFGGVIFFACIT). Residues 85–123 (KFIPEPTLGPSTDGKRRKKNGDEGGKDMMKKHRKQVLYS) are Lumenal-facing. Residues 124-144 (GLITAIGISLHNFPEGMAVFL) traverse the membrane as a helical segment. Residues 145 to 156 (GSIKGMRVGVNL) lie on the Cytoplasmic side of the membrane. Residues 157-177 (ALAIALHNIPEGVAVALPIYF) form a helical membrane-spanning segment. Topologically, residues 178 to 187 (ATESKWQAFK) are lumenal. Residues 188–208 (LATLSGLAEPLGVIIVAYLFP) form a helical membrane-spanning segment. Topologically, residues 209–219 (RSLSPEILEGL) are cytoplasmic. Residues 220 to 240 (LGAVGGIMAFLTLHEMLPLAF) form a helical membrane-spanning segment. The Lumenal portion of the chain corresponds to 241 to 250 (DYAGQKQAVK). A helical membrane pass occupies residues 251–271 (AVFFGMACMSASLYFLELSLP). Over 272-276 (ETMSL) the chain is Cytoplasmic.

It belongs to the ZIP transporter (TC 2.A.5) family. ZupT subfamily. In terms of tissue distribution, expressed in hypocotyls, cotyledons, leaves and anthers.

The protein resides in the endoplasmic reticulum membrane. Its function is as follows. Zinc transporter involved response to salt stress. May act through the regulation of zinc levels required to induce the unfolded protein response (UPR) pathway. In Arabidopsis thaliana (Mouse-ear cress), this protein is Zinc transporter ZTP29 (ZTP29).